A 250-amino-acid chain; its full sequence is Probable E3 ubiquitin-protein ligase RHY1A (250 aa).

Positions 1 to 10 are enriched in polar residues; that stretch reads MTSASELFST. Residues 1 to 106 form a disordered region; sequence MTSASELFST…ETQSSSFVNL (106 aa). The segment covering 29-47 has biased composition (basic residues); the sequence is YRHHSHHHHRRHGVHHHNQ. Positions 48–58 are enriched in basic and acidic residues; it reads RHDSDGCDPLR. The span at 60–69 shows a compositional bias: basic residues; sequence PTPRLRRFFH. Basic and acidic residues predominate over residues 71-80; the sequence is PIQERSRPIR. The span at 91 to 102 shows a compositional bias: low complexity; the sequence is TDSTDTETQSSS. Residues 203-244 form an RING-type; atypical zinc finger; sequence CSICLESFTKGDMLISLPCTHSFHSSCLNPWLRACGDCPCCR.

It carries out the reaction S-ubiquitinyl-[E2 ubiquitin-conjugating enzyme]-L-cysteine + [acceptor protein]-L-lysine = [E2 ubiquitin-conjugating enzyme]-L-cysteine + N(6)-ubiquitinyl-[acceptor protein]-L-lysine.. Its pathway is protein modification; protein ubiquitination. Probable E3 ubiquitin-protein ligase that may possess E3 ubiquitin ligase activity in vitro. This Arabidopsis thaliana (Mouse-ear cress) protein is Probable E3 ubiquitin-protein ligase RHY1A.